The following is a 330-amino-acid chain: Phenylalanine--tRNA ligase alpha subunit (330 aa).

E246 contributes to the Mg(2+) binding site.

It belongs to the class-II aminoacyl-tRNA synthetase family. Phe-tRNA synthetase alpha subunit type 1 subfamily. In terms of assembly, tetramer of two alpha and two beta subunits. It depends on Mg(2+) as a cofactor.

Its subcellular location is the cytoplasm. It carries out the reaction tRNA(Phe) + L-phenylalanine + ATP = L-phenylalanyl-tRNA(Phe) + AMP + diphosphate + H(+). The polypeptide is Phenylalanine--tRNA ligase alpha subunit (Sulfurimonas denitrificans (strain ATCC 33889 / DSM 1251) (Thiomicrospira denitrificans (strain ATCC 33889 / DSM 1251))).